Reading from the N-terminus, the 537-residue chain is Methionine--tRNA ligase (537 aa).

Residues 11 to 21 (AYPNAAPHIGH) carry the 'HIGH' region motif. Residues 301–305 (KMSKS) carry the 'KMSKS' region motif. Lys304 serves as a coordination point for ATP. Residues 503-537 (PPPTGVFPRYQPSEIEGADPVKSSSKRREHNKRRE) form a disordered region. The segment covering 526–537 (SSKRREHNKRRE) has biased composition (basic residues).

The protein belongs to the class-I aminoacyl-tRNA synthetase family. MetG type 2B subfamily. As to quaternary structure, monomer.

The protein localises to the cytoplasm. The catalysed reaction is tRNA(Met) + L-methionine + ATP = L-methionyl-tRNA(Met) + AMP + diphosphate. Its function is as follows. Is required not only for elongation of protein synthesis but also for the initiation of all mRNA translation through initiator tRNA(fMet) aminoacylation. In Mycobacterium leprae (strain TN), this protein is Methionine--tRNA ligase.